A 592-amino-acid polypeptide reads, in one-letter code: 1,4-alpha-glucan branching enzyme GlgB 2 (592 aa).

Asp-274 functions as the Nucleophile in the catalytic mechanism. Catalysis depends on Glu-327, which acts as the Proton donor.

Belongs to the glycosyl hydrolase 13 family. GlgB subfamily. Monomer.

It carries out the reaction Transfers a segment of a (1-&gt;4)-alpha-D-glucan chain to a primary hydroxy group in a similar glucan chain.. It functions in the pathway glycan biosynthesis; glycogen biosynthesis. Its function is as follows. Catalyzes the formation of the alpha-1,6-glucosidic linkages in glycogen by scission of a 1,4-alpha-linked oligosaccharide from growing alpha-1,4-glucan chains and the subsequent attachment of the oligosaccharide to the alpha-1,6 position. The polypeptide is 1,4-alpha-glucan branching enzyme GlgB 2 (Streptomyces avermitilis (strain ATCC 31267 / DSM 46492 / JCM 5070 / NBRC 14893 / NCIMB 12804 / NRRL 8165 / MA-4680)).